The chain runs to 274 residues: 3-methyl-2-oxobutanoate hydroxymethyltransferase (274 aa).

Positions 49 and 88 each coordinate Mg(2+). Residues aspartate 49–serine 50, aspartate 88, and lysine 118 each bind 3-methyl-2-oxobutanoate. Glutamate 120 contributes to the Mg(2+) binding site. Catalysis depends on glutamate 187, which acts as the Proton acceptor.

It belongs to the PanB family. In terms of assembly, homodecamer; pentamer of dimers. Requires Mg(2+) as cofactor.

The protein localises to the cytoplasm. The enzyme catalyses 3-methyl-2-oxobutanoate + (6R)-5,10-methylene-5,6,7,8-tetrahydrofolate + H2O = 2-dehydropantoate + (6S)-5,6,7,8-tetrahydrofolate. Its pathway is cofactor biosynthesis; (R)-pantothenate biosynthesis; (R)-pantoate from 3-methyl-2-oxobutanoate: step 1/2. Functionally, catalyzes the reversible reaction in which hydroxymethyl group from 5,10-methylenetetrahydrofolate is transferred onto alpha-ketoisovalerate to form ketopantoate. The polypeptide is 3-methyl-2-oxobutanoate hydroxymethyltransferase (Allorhizobium ampelinum (strain ATCC BAA-846 / DSM 112012 / S4) (Agrobacterium vitis (strain S4))).